Here is a 341-residue protein sequence, read N- to C-terminus: Phenylalanine--tRNA ligase alpha subunit (341 aa).

Glu254 is a Mg(2+) binding site.

Belongs to the class-II aminoacyl-tRNA synthetase family. Phe-tRNA synthetase alpha subunit type 1 subfamily. Tetramer of two alpha and two beta subunits. Mg(2+) serves as cofactor.

The protein localises to the cytoplasm. It carries out the reaction tRNA(Phe) + L-phenylalanine + ATP = L-phenylalanyl-tRNA(Phe) + AMP + diphosphate + H(+). The sequence is that of Phenylalanine--tRNA ligase alpha subunit from Chlorobaculum tepidum (strain ATCC 49652 / DSM 12025 / NBRC 103806 / TLS) (Chlorobium tepidum).